The sequence spans 994 residues: Protein translocase subunit SecA (994 aa).

Residues glutamine 85, 103-107, and aspartate 492 contribute to the ATP site; that span reads GEGKT. A compositionally biased stretch (low complexity) spans 868-888; it reads IPDGAGPVADAQPVRPAAARQ. Positions 868 to 994 are disordered; that stretch reads IPDGAGPVAD…HGDPARRNTE (127 aa). Over residues 889-900 the composition is skewed to pro residues; sequence TPPPPSPVPSAP. Zn(2+)-binding residues include cysteine 973, cysteine 975, cysteine 984, and histidine 985. Residues 984 to 994 show a composition bias toward basic and acidic residues; the sequence is CHGDPARRNTE.

The protein belongs to the SecA family. Monomer and homodimer. Part of the essential Sec protein translocation apparatus which comprises SecA, SecYEG and auxiliary proteins SecDF. Other proteins may also be involved. It depends on Zn(2+) as a cofactor.

The protein localises to the cell membrane. The protein resides in the cytoplasm. The catalysed reaction is ATP + H2O + cellular proteinSide 1 = ADP + phosphate + cellular proteinSide 2.. In terms of biological role, part of the Sec protein translocase complex. Interacts with the SecYEG preprotein conducting channel. Has a central role in coupling the hydrolysis of ATP to the transfer of proteins into and across the cell membrane, serving as an ATP-driven molecular motor driving the stepwise translocation of polypeptide chains across the membrane. The sequence is that of Protein translocase subunit SecA from Frankia casuarinae (strain DSM 45818 / CECT 9043 / HFP020203 / CcI3).